A 245-amino-acid polypeptide reads, in one-letter code: NAD(P)H-quinone oxidoreductase subunit K (245 aa).

[4Fe-4S] cluster contacts are provided by cysteine 58, cysteine 59, cysteine 123, and cysteine 154.

The protein belongs to the complex I 20 kDa subunit family. In terms of assembly, NDH-1 can be composed of about 15 different subunits; different subcomplexes with different compositions have been identified which probably have different functions. Requires [4Fe-4S] cluster as cofactor.

It localises to the cellular thylakoid membrane. The catalysed reaction is a plastoquinone + NADH + (n+1) H(+)(in) = a plastoquinol + NAD(+) + n H(+)(out). It carries out the reaction a plastoquinone + NADPH + (n+1) H(+)(in) = a plastoquinol + NADP(+) + n H(+)(out). Functionally, NDH-1 shuttles electrons from an unknown electron donor, via FMN and iron-sulfur (Fe-S) centers, to quinones in the respiratory and/or the photosynthetic chain. The immediate electron acceptor for the enzyme in this species is believed to be plastoquinone. Couples the redox reaction to proton translocation, and thus conserves the redox energy in a proton gradient. Cyanobacterial NDH-1 also plays a role in inorganic carbon-concentration. This is NAD(P)H-quinone oxidoreductase subunit K from Nostoc sp. (strain PCC 7120 / SAG 25.82 / UTEX 2576).